Here is a 475-residue protein sequence, read N- to C-terminus: Ribulose bisphosphate carboxylase large chain (475 aa).

Residues Met1 to Ser2 constitute a propeptide that is removed on maturation. Pro3 carries the post-translational modification N-acetylproline. At Lys14 the chain carries N6,N6,N6-trimethyllysine. 2 residues coordinate substrate: Asn123 and Thr173. Lys175 (proton acceptor) is an active-site residue. Position 177 (Lys177) interacts with substrate. Residues Lys201, Asp203, and Glu204 each contribute to the Mg(2+) site. Lys201 is subject to N6-carboxylysine. Residue His294 is the Proton acceptor of the active site. Substrate contacts are provided by Arg295, His327, and Ser379.

The protein belongs to the RuBisCO large chain family. Type I subfamily. In terms of assembly, heterohexadecamer of 8 large chains and 8 small chains; disulfide-linked. The disulfide link is formed within the large subunit homodimers. Requires Mg(2+) as cofactor. Post-translationally, the disulfide bond which can form in the large chain dimeric partners within the hexadecamer appears to be associated with oxidative stress and protein turnover.

It localises to the plastid. The protein resides in the chloroplast. It carries out the reaction 2 (2R)-3-phosphoglycerate + 2 H(+) = D-ribulose 1,5-bisphosphate + CO2 + H2O. The catalysed reaction is D-ribulose 1,5-bisphosphate + O2 = 2-phosphoglycolate + (2R)-3-phosphoglycerate + 2 H(+). Functionally, ruBisCO catalyzes two reactions: the carboxylation of D-ribulose 1,5-bisphosphate, the primary event in carbon dioxide fixation, as well as the oxidative fragmentation of the pentose substrate in the photorespiration process. Both reactions occur simultaneously and in competition at the same active site. In Populus tremuloides (Quaking aspen), this protein is Ribulose bisphosphate carboxylase large chain.